A 498-amino-acid chain; its full sequence is L-ornithine N(5)-monooxygenase (498 aa).

FAD is bound by residues 80 to 88 and glutamine 99; that span reads ERQKQFAWH. Lysine 104 is a substrate binding site. Valine 165 is an FAD binding site. NADP(+) is bound by residues 251-254 and arginine 276; that span reads SGQS. Substrate-binding positions include 290 to 293 and asparagine 320; that span reads NEVF. Position 320–322 (320–322) interacts with NADP(+); sequence NYS. Residue 463-465 participates in FAD binding; that stretch reads SLL. Serine 466 provides a ligand contact to substrate.

This sequence belongs to the lysine N(6)-hydroxylase/L-ornithine N(5)-oxygenase family. In terms of assembly, homotetramer. Requires FAD as cofactor.

It carries out the reaction L-ornithine + NADPH + O2 = N(5)-hydroxy-L-ornithine + NADP(+) + H2O. It catalyses the reaction L-ornithine + NADH + O2 = N(5)-hydroxy-L-ornithine + NAD(+) + H2O. It functions in the pathway siderophore biosynthesis. Its function is as follows. Catalyzes the conversion of L-ornithine to N(5)-hydroxyornithine, the first step in the biosynthesis of all hydroxamate-containing siderophores, such as the secreted triacetylfusarinine C (TAFC) involved in iron uptake and the intracellular iron storage compound desferriferricrocin (DFFC). This chain is L-ornithine N(5)-monooxygenase, found in Emericella nidulans (strain FGSC A4 / ATCC 38163 / CBS 112.46 / NRRL 194 / M139) (Aspergillus nidulans).